Here is a 68-residue protein sequence, read N- to C-terminus: Urocalcin (68 aa).

Positions 1-27 (MKASTLVVIFIVIFITISSFSIHDVQA) are cleaved as a signal peptide. The propeptide occupies 28–35 (SGVEKREQ). 3 cysteine pairs are disulfide-bonded: cysteine 38/cysteine 52, cysteine 45/cysteine 56, and cysteine 51/cysteine 67. The interval 57-59 (KRR) is essential for stimulation of [3H]ryanodine binding to RYR1.

Belongs to the scorpion calcin family. In terms of tissue distribution, expressed by the venom gland.

Its subcellular location is the secreted. In terms of biological role, this toxin only weakly stabilizes ryanodine receptor 1 (RyR1) opening in a long-lasting subconductance state (55% of the full conductance state obtained only at high concentrations (1 uM)). In addition, it has been shown to dose-dependently stimulate ryanodine binding to RyR1 with the lowest activity of all calcins (EC(50)=376 nM). It also augments the bell-shaped calcium-[3H]ryanodine binding curve that is maximal at about 10 uM calcium concentration. It binds a different site as ryanodine. It acts synergistically with caffeine. In contrast to other calcins, it does not trigger calcium release from sarcoplasmic vesicles even at high concentration (1 uM). In vivo, intracerebroventricular injection into mice induces neurotoxic symptoms, followed by death. The chain is Urocalcin from Urodacus yaschenkoi (Inland robust scorpion).